A 464-amino-acid polypeptide reads, in one-letter code: MGVSKLDILYRRLLLTKLFIRGWGRPEDLKRLFEFRKMIGNRERCQNLVSSDYPVHIDKVEEQSDCKILDGHFVSPMAHYVPGIMPIESVVARFQFIVPKEWNSRYRPVCIHLAGTGDHHYWRRRTLMARPMIKEARMASLLLENPYYGCRKPKDQVRSSLKNVSDLFVMGGALILESAALLHWLEREGYGPLGMTGISMGGHMASLAVSNWPKPMPLIPCLSWSTASGVFTTGVLSKSINWRELEKQYYTQTVYEEEIIHMLEYCGTDSFKMGHEFMNHLPSNADKLTNLNLVSRTLNLDMTDQVVSPKDAKCHKSGKTSISAPSNGQLLQDTAKMECLNQTLSTNKSWFASYNPQSFHLLNREQRRSNRQKESLIFMKGVMDECTHVANFSVPVDPSLIIVVQAKEDAYIPRTGVRSLQEIWPGCEIRYLEGGHISAYLFKQGLFRQAIYDAFERFLHKYAN.

The first 24 residues, 1–24 (MGVSKLDILYRRLLLTKLFIRGWG), serve as a signal peptide directing secretion. N-linked (GlcNAc...) asparagine glycosylation is present at Asn-341.

The protein belongs to the AB hydrolase superfamily.

It localises to the secreted. This Mus musculus (Mouse) protein is Protein ABHD18.